Consider the following 297-residue polypeptide: Glycerol-3-phosphate dehydrogenase [NAD(P)+] (297 aa).

NADPH-binding residues include Trp-11, Arg-33, and Lys-79. Lys-79, Gly-107, and Ser-109 together coordinate sn-glycerol 3-phosphate. An NADPH-binding site is contributed by Ala-111. Sn-glycerol 3-phosphate is bound by residues Lys-161, Asp-214, Ser-224, Arg-225, and Asn-226. Catalysis depends on Lys-161, which acts as the Proton acceptor. Arg-225 is a binding site for NADPH. Val-249 and Glu-251 together coordinate NADPH.

Belongs to the NAD-dependent glycerol-3-phosphate dehydrogenase family.

It localises to the cytoplasm. The enzyme catalyses sn-glycerol 3-phosphate + NAD(+) = dihydroxyacetone phosphate + NADH + H(+). It carries out the reaction sn-glycerol 3-phosphate + NADP(+) = dihydroxyacetone phosphate + NADPH + H(+). It functions in the pathway membrane lipid metabolism; glycerophospholipid metabolism. Functionally, catalyzes the reduction of the glycolytic intermediate dihydroxyacetone phosphate (DHAP) to sn-glycerol 3-phosphate (G3P), the key precursor for phospholipid synthesis. The chain is Glycerol-3-phosphate dehydrogenase [NAD(P)+] from Campylobacter jejuni subsp. jejuni serotype O:6 (strain 81116 / NCTC 11828).